Reading from the N-terminus, the 340-residue chain is uncharacterized protein (340 aa).

The tract at residues 284–340 (DHSTPTNYQQETPASQQQLDQENEPIKPSKKSNSSSLPRGTTQPKSNSINRVSKLID) is disordered. 2 stretches are compositionally biased toward polar residues: residues 286-303 (STPT…QQLD) and 320-334 (LPRG…SINR).

This is an uncharacterized protein from Mycoplasma genitalium (strain ATCC 33530 / DSM 19775 / NCTC 10195 / G37) (Mycoplasmoides genitalium).